The sequence spans 281 residues: Bis(5'-nucleosyl)-tetraphosphatase, symmetrical (281 aa).

The protein belongs to the Ap4A hydrolase family.

The enzyme catalyses P(1),P(4)-bis(5'-adenosyl) tetraphosphate + H2O = 2 ADP + 2 H(+). In terms of biological role, hydrolyzes diadenosine 5',5'''-P1,P4-tetraphosphate to yield ADP. The sequence is that of Bis(5'-nucleosyl)-tetraphosphatase, symmetrical from Delftia acidovorans (strain DSM 14801 / SPH-1).